We begin with the raw amino-acid sequence, 258 residues long: MSSLFIAGHEFHSRLFTGTGKYASADAMMDSLTASESELVTLSLRRMDLKNQTDNILKPLQQQRIKLLPNTSGARTAKEAVFAAELAREALETNWVKLEIHPDPRYLMPDGMETLLAAEELIKKGFVVMPYVHADPVLCKRLEEVGCQCVMPLGSPIGSNMGLASRPFLEIIIEQSTVPVIIDAGIGAPSDAALALEIGADAVLVNTAMAVARQPAKMGKAFRLAVEAGRMAYESGLGERRVQAQATSPLTDFLGALS.

Lys-97 (schiff-base intermediate with DXP) is an active-site residue. Residues Gly-158, 184–185, and 206–207 each bind 1-deoxy-D-xylulose 5-phosphate; these read AG and NT.

The protein belongs to the ThiG family. As to quaternary structure, homotetramer. Forms heterodimers with either ThiH or ThiS.

Its subcellular location is the cytoplasm. The enzyme catalyses [ThiS sulfur-carrier protein]-C-terminal-Gly-aminoethanethioate + 2-iminoacetate + 1-deoxy-D-xylulose 5-phosphate = [ThiS sulfur-carrier protein]-C-terminal Gly-Gly + 2-[(2R,5Z)-2-carboxy-4-methylthiazol-5(2H)-ylidene]ethyl phosphate + 2 H2O + H(+). Its pathway is cofactor biosynthesis; thiamine diphosphate biosynthesis. Catalyzes the rearrangement of 1-deoxy-D-xylulose 5-phosphate (DXP) to produce the thiazole phosphate moiety of thiamine. Sulfur is provided by the thiocarboxylate moiety of the carrier protein ThiS. In vitro, sulfur can be provided by H(2)S. The polypeptide is Thiazole synthase (Marinomonas sp. (strain MWYL1)).